The primary structure comprises 377 residues: Chaperone protein DnaJ (377 aa).

The J domain maps to 6–70; that stretch reads DYYKILGIDK…EKKAIYDKYG (65 aa). Residues 143–225 form a CR-type zinc finger; sequence GRVISQKLDK…CKGAKKIKES (83 aa). Residues Cys156, Cys159, Cys173, Cys176, Cys199, Cys202, Cys213, and Cys216 each coordinate Zn(2+). 4 CXXCXGXG motif repeats span residues 156 to 163, 173 to 180, 199 to 206, and 213 to 220; these read CESCNGTG, CSTCNGRG, CSTCNGLG, and CPSCKGAK.

It belongs to the DnaJ family. As to quaternary structure, homodimer. Zn(2+) is required as a cofactor.

It is found in the cytoplasm. Participates actively in the response to hyperosmotic and heat shock by preventing the aggregation of stress-denatured proteins and by disaggregating proteins, also in an autonomous, DnaK-independent fashion. Unfolded proteins bind initially to DnaJ; upon interaction with the DnaJ-bound protein, DnaK hydrolyzes its bound ATP, resulting in the formation of a stable complex. GrpE releases ADP from DnaK; ATP binding to DnaK triggers the release of the substrate protein, thus completing the reaction cycle. Several rounds of ATP-dependent interactions between DnaJ, DnaK and GrpE are required for fully efficient folding. Also involved, together with DnaK and GrpE, in the DNA replication of plasmids through activation of initiation proteins. The chain is Chaperone protein DnaJ from Mycoplasmopsis pulmonis (strain UAB CTIP) (Mycoplasma pulmonis).